A 381-amino-acid polypeptide reads, in one-letter code: Arogenate dehydratase/prephenate dehydratase 2, chloroplastic (381 aa).

Positions 1-32 (MAMHTVRLSPATQLHGGISSNLSPPNRKPNNS) are disordered. The transit peptide at 1–66 (MAMHTVRLSP…DANGRDNSVR (66 aa)) directs the protein to the chloroplast. Residues 18–32 (ISSNLSPPNRKPNNS) show a composition bias toward polar residues. Residues 100–275 (RVAYQGVRGA…NVTRFLMLAR (176 aa)) enclose the Prephenate dehydratase domain. Residues 289-375 (SIVFSLEEGP…TFLRVLGSYP (87 aa)) form the ACT domain.

In terms of tissue distribution, expressed in roots, leaves, stems, flowers and siliques. Most abundant in leaves and seeds.

It localises to the plastid. The protein resides in the chloroplast stroma. The enzyme catalyses L-arogenate + H(+) = L-phenylalanine + CO2 + H2O. The catalysed reaction is prephenate + H(+) = 3-phenylpyruvate + CO2 + H2O. It functions in the pathway amino-acid biosynthesis; L-phenylalanine biosynthesis; L-phenylalanine from L-arogenate: step 1/1. The protein operates within amino-acid biosynthesis; L-phenylalanine biosynthesis; phenylpyruvate from prephenate: step 1/1. In terms of biological role, converts the prephenate produced from the shikimate-chorismate pathway into phenylalanine. Dehydratase that uses arogenate and prephenate as substrates. Utilzes more efficiently arogenate than prephenate. Required for chloroplast division prior to ARC5, but in an ARC3- and ARC6-dependent manner, especially involved in the Z-ring formation. In Arabidopsis thaliana (Mouse-ear cress), this protein is Arogenate dehydratase/prephenate dehydratase 2, chloroplastic.